Reading from the N-terminus, the 174-residue chain is 3-hydroxyanthranilate 3,4-dioxygenase (174 aa).

R47 is a binding site for O2. Residues H51, E57, and H95 each contribute to the Fe cation site. Residue E57 participates in substrate binding. Substrate-binding residues include R99 and E110. C125, C128, C162, and C165 together coordinate Fe cation.

Belongs to the 3-HAO family. In terms of assembly, homodimer. Fe(2+) is required as a cofactor.

It carries out the reaction 3-hydroxyanthranilate + O2 = (2Z,4Z)-2-amino-3-carboxymuconate 6-semialdehyde. It participates in cofactor biosynthesis; NAD(+) biosynthesis; quinolinate from L-kynurenine: step 3/3. In terms of biological role, catalyzes the oxidative ring opening of 3-hydroxyanthranilate to 2-amino-3-carboxymuconate semialdehyde, which spontaneously cyclizes to quinolinate. The polypeptide is 3-hydroxyanthranilate 3,4-dioxygenase (Paraburkholderia phytofirmans (strain DSM 17436 / LMG 22146 / PsJN) (Burkholderia phytofirmans)).